A 200-amino-acid chain; its full sequence is Shikimate kinase (200 aa).

An ATP-binding site is contributed by 41–46; it reads GVGKSS. Ser-45 is a Mg(2+) binding site. Substrate contacts are provided by Asp-63, Arg-87, and Gly-109. Arg-147 is an ATP binding site. Arg-166 lines the substrate pocket.

It belongs to the shikimate kinase family. Monomer. Requires Mg(2+) as cofactor.

Its subcellular location is the cytoplasm. It carries out the reaction shikimate + ATP = 3-phosphoshikimate + ADP + H(+). It functions in the pathway metabolic intermediate biosynthesis; chorismate biosynthesis; chorismate from D-erythrose 4-phosphate and phosphoenolpyruvate: step 5/7. Catalyzes the specific phosphorylation of the 3-hydroxyl group of shikimic acid using ATP as a cosubstrate. This Caulobacter vibrioides (strain NA1000 / CB15N) (Caulobacter crescentus) protein is Shikimate kinase.